Consider the following 568-residue polypeptide: Proline--tRNA ligase (568 aa).

The protein belongs to the class-II aminoacyl-tRNA synthetase family. ProS type 1 subfamily. In terms of assembly, homodimer.

The protein resides in the cytoplasm. It catalyses the reaction tRNA(Pro) + L-proline + ATP = L-prolyl-tRNA(Pro) + AMP + diphosphate. Catalyzes the attachment of proline to tRNA(Pro) in a two-step reaction: proline is first activated by ATP to form Pro-AMP and then transferred to the acceptor end of tRNA(Pro). As ProRS can inadvertently accommodate and process non-cognate amino acids such as alanine and cysteine, to avoid such errors it has two additional distinct editing activities against alanine. One activity is designated as 'pretransfer' editing and involves the tRNA(Pro)-independent hydrolysis of activated Ala-AMP. The other activity is designated 'posttransfer' editing and involves deacylation of mischarged Ala-tRNA(Pro). The misacylated Cys-tRNA(Pro) is not edited by ProRS. The sequence is that of Proline--tRNA ligase from Listeria innocua serovar 6a (strain ATCC BAA-680 / CLIP 11262).